The following is a 648-amino-acid chain: MTPLLELKDIRRSYPAGDEQVEVLKGISLDIYAGEMVAIVGASGSGKSTLMNILGCLDKATSGTYRVAGQDVATLDADALAQLRREHFGFIFQRYHLLSHLTAEQNVEVPAVYAGLERKQRLLRAQELLQRLGLEDRTEYYPAQLSGGQQQRVSIARALMNGGQVILADEPTGALDSHSGEEVMAILHQLRDRGHTVIIVTHDPQVAAQAERVIEIRDGEIVRNPPAVEKVNATGGTEPVVNTASGWRQFVSGFNEALTMAWRALAANKMRTLLTMLGIIIGIASVVSIVVVGDAAKQMVLADIRSIGTNTIDVYPGNDFGDDDPQYQQALKYDDLIAIQKQPWVASATPAVSQNLRLRYNNVDVAASANGVSGDYFNVYGMTFSEGNTFNQEQLNGRAQVVVLDSNTRRQLFPHKADVVGEVILVGNMPARVIGVAEEKQSMFGSSKVLRVWLPYSTMSGRVMGQSWLNSITVRVKEGFDSAEAEQQLTRLLSLRHGKKDFFTWNMDGVLKTVEKTTRTLQLFLTLVAVISLVVGGIGVMNIMLVSVTERTREIGIRMAVGARASDVLQQFLIEAVLVCLVGGALGITLSLLIAFTLQLFLPGWEIGFSPLALLLAFLCSTVTGILFGWLPARNAARLDPVDALARE.

One can recognise an ABC transporter domain in the interval 5 to 243 (LELKDIRRSY…TGGTEPVVNT (239 aa)). 41 to 48 (GASGSGKS) is a binding site for ATP. 4 consecutive transmembrane segments (helical) span residues 273-293 (LLTMLGIIIGIASVVSIVVVG), 523-543 (LFLTLVAVISLVVGGIGVMNI), 576-596 (AVLVCLVGGALGITLSLLIAF), and 611-631 (PLALLLAFLCSTVTGILFGWL).

The protein belongs to the ABC transporter superfamily. Macrolide exporter (TC 3.A.1.122) family. As to quaternary structure, homodimer. Part of the tripartite efflux system MacAB-TolC, which is composed of an inner membrane transporter, MacB, a periplasmic membrane fusion protein, MacA, and an outer membrane component, TolC. The complex forms a large protein conduit and can translocate molecules across both the inner and outer membranes. Interacts with MacA.

It localises to the cell inner membrane. Part of the tripartite efflux system MacAB-TolC. MacB is a non-canonical ABC transporter that contains transmembrane domains (TMD), which form a pore in the inner membrane, and an ATP-binding domain (NBD), which is responsible for energy generation. Confers resistance against macrolides. The chain is Macrolide export ATP-binding/permease protein MacB from Escherichia coli O6:K15:H31 (strain 536 / UPEC).